A 261-amino-acid polypeptide reads, in one-letter code: Leucine-rich repeat-containing protein 61 (261 aa).

LRR repeat units follow at residues 54–75 (GLEW…ASLR), 76–97 (QLAV…AACE), and 98–119 (NLQC…QCLA). The 46-residue stretch at 138 to 183 (NPLCASPCYWASVRELLPGLKVLDGERVSGRGSDFYQLCRDLDSSL) folds into the LRRCT domain.

The sequence is that of Leucine-rich repeat-containing protein 61 (LRRC61) from Bos taurus (Bovine).